Here is a 380-residue protein sequence, read N- to C-terminus: GDP-mannose:cellobiosyl-diphosphopolyprenol alpha-mannosyltransferase (380 aa).

Belongs to the glycosyltransferase group 1 family. Glycosyltransferase 4 subfamily.

The enzyme catalyses beta-D-Glc-(1-&gt;4)-alpha-D-Glc-di-trans,octa-cis-undecaprenyl diphosphate + GDP-alpha-D-mannose = alpha-D-Man-(1-&gt;3)-beta-D-Glc-(1-&gt;4)-alpha-D-Glc-1-di-trans,octa-cis-undecaprenyl diphosphate + GDP + H(+). In terms of biological role, involved in the biosynthesis of the exopolysaccharide xanthan, a polymer that is comprised of repeating pentasaccharide units with the structure of a beta-(1,4)-linked D-glucose backbone with trisaccharide side chains composed of mannose-beta-(1,4)-glucuronic acid-beta-(1,2)-mannose attached to alternate glucose residues in the backbone by alpha-(1,3) linkages. Xanthan is involved in pathogenicity but has also been used in a variety of applications as a specialty polymer for commercial applications, including food additives, where they act as viscosifying, stabilizing, emulsifying, or gelling agents. The protein is GDP-mannose:cellobiosyl-diphosphopolyprenol alpha-mannosyltransferase (gumH) of Xanthomonas oryzae pv. oryzae (strain PXO99A).